The following is a 183-amino-acid chain: Dual-action ribosomal maturation protein DarP (183 aa).

Belongs to the DarP family.

The protein resides in the cytoplasm. Member of a network of 50S ribosomal subunit biogenesis factors which assembles along the 30S-50S interface, preventing incorrect 23S rRNA structures from forming. Promotes peptidyl transferase center (PTC) maturation. The sequence is that of Dual-action ribosomal maturation protein DarP from Escherichia coli O7:K1 (strain IAI39 / ExPEC).